The sequence spans 503 residues: Zinc finger and BTB domain-containing protein 37 (503 aa).

The BTB domain occupies Cys-32–Leu-96. 2 disordered regions span residues Gln-140–Glu-206 and Gly-280–Glu-344. Over residues Lys-144–Arg-154 the composition is skewed to basic and acidic residues. Residues Val-155–His-167 are compositionally biased toward polar residues. Positions Thr-319 to Lys-336 are enriched in basic and acidic residues. C2H2-type zinc fingers lie at residues Leu-373–His-395, Phe-401–His-423, and Phe-429–His-452. Positions Pro-457–Asp-503 are disordered. Residues Ser-465 to Gly-474 show a composition bias toward polar residues.

It localises to the nucleus. May be involved in transcriptional regulation. The chain is Zinc finger and BTB domain-containing protein 37 (ZBTB37) from Homo sapiens (Human).